The following is a 357-amino-acid chain: Zinc finger protein 830 (357 aa).

A C2H2-type zinc finger spans residues 47–69 (CVVCNIQIKSELLWPAHILGKQH). Disordered regions lie at residues 98 to 126 (RKGSEPENQESKRIKGTEDQPTALKTKLP), 157 to 194 (DDDEVEGEEYENVNEASTSLQKPAEIPLPPPTSSADRL), and 231 to 255 (ALPEGFFDDPEADAKVRKVDAPKDQ). Positions 99-115 (KGSEPENQESKRIKGTE) are enriched in basic and acidic residues. Residues 157–168 (DDDEVEGEEYEN) are compositionally biased toward acidic residues. Residues 242–255 (ADAKVRKVDAPKDQ) show a composition bias toward basic and acidic residues. The stretch at 279-325 (AEEDEEGRLDRQIDEIDEQIECYRRVEHLRDLKDTLQDAKMEVLKSK) forms a coiled coil.

It localises to the nucleus. It is found in the chromosome. The protein resides in the nucleus speckle. Its function is as follows. May act as an important regulator of the cell cycle that participates in the maintenance of genome integrity. The protein is Zinc finger protein 830 of Xenopus tropicalis (Western clawed frog).